The chain runs to 390 residues: Protein-glutamate methylesterase/protein-glutamine glutaminase 1 (390 aa).

A Response regulatory domain is found at 4–121; the sequence is KVLVVDDSGF…SRNPQKVKQL (118 aa). Residue Asp-55 is modified to 4-aspartylphosphate. Residues 132-186 are compositionally biased toward low complexity; it reads SNRRSSGIGSASAASPAPAAPAPSTLSSRAPAPSAAAPARAVPSRTVAPAAAPAA. A disordered region spans residues 132-201; it reads SNRRSSGIGS…PAHPTTTGTA (70 aa). A CheB-type methylesterase domain is found at 195-387; it reads PTTTGTAKRK…LDDIGRHLVE (193 aa). Catalysis depends on residues Ser-214, His-241, and Asp-334.

It belongs to the CheB family. Phosphorylated by CheA. Phosphorylation of the N-terminal regulatory domain activates the methylesterase activity.

It localises to the cytoplasm. The enzyme catalyses [protein]-L-glutamate 5-O-methyl ester + H2O = L-glutamyl-[protein] + methanol + H(+). It carries out the reaction L-glutaminyl-[protein] + H2O = L-glutamyl-[protein] + NH4(+). Its function is as follows. Involved in chemotaxis. Part of a chemotaxis signal transduction system that modulates chemotaxis in response to various stimuli. Catalyzes the demethylation of specific methylglutamate residues introduced into the chemoreceptors (methyl-accepting chemotaxis proteins or MCP) by CheR. Also mediates the irreversible deamidation of specific glutamine residues to glutamic acid. The sequence is that of Protein-glutamate methylesterase/protein-glutamine glutaminase 1 from Pseudomonas syringae pv. tomato (strain ATCC BAA-871 / DC3000).